The chain runs to 389 residues: Formate-dependent phosphoribosylglycinamide formyltransferase (389 aa).

Residues 15 to 16 (EL) and E75 each bind N(1)-(5-phospho-beta-D-ribosyl)glycinamide. ATP-binding positions include R107, K148, 153–158 (SSGKGQ), 188–191 (EEFL), and E196. An ATP-grasp domain is found at 112 to 302 (NLAAGELGLR…EFDLHLRAVL (191 aa)). Residues E261 and E273 each contribute to the Mg(2+) site. N(1)-(5-phospho-beta-D-ribosyl)glycinamide is bound by residues D280, K350, and 357–358 (RR).

The protein belongs to the PurK/PurT family. Homodimer.

The catalysed reaction is N(1)-(5-phospho-beta-D-ribosyl)glycinamide + formate + ATP = N(2)-formyl-N(1)-(5-phospho-beta-D-ribosyl)glycinamide + ADP + phosphate + H(+). Its pathway is purine metabolism; IMP biosynthesis via de novo pathway; N(2)-formyl-N(1)-(5-phospho-D-ribosyl)glycinamide from N(1)-(5-phospho-D-ribosyl)glycinamide (formate route): step 1/1. Involved in the de novo purine biosynthesis. Catalyzes the transfer of formate to 5-phospho-ribosyl-glycinamide (GAR), producing 5-phospho-ribosyl-N-formylglycinamide (FGAR). Formate is provided by PurU via hydrolysis of 10-formyl-tetrahydrofolate. This chain is Formate-dependent phosphoribosylglycinamide formyltransferase, found in Synechococcus sp. (strain CC9311).